The following is an 84-amino-acid chain: MLGIDVKKTNEELIISWQIAKVQIPLSEIIEVTEDETYAGVEEENVIRIGTAYATTDRILIRTVKQNYLLFTTNKVAILNKINA.

Belongs to the UPF0457 family.

This is UPF0457 protein BCE33L2961 from Bacillus cereus (strain ZK / E33L).